The chain runs to 105 residues: Delta-hexatoxin-Mg1a (105 aa).

The signal sequence occupies residues 1–18 (MKTLVIACVALVLVVVHG). The propeptide occupies 19 to 60 (EVIEEVNEKQLQESVEEKYSLLQRLEKLDEAITAEENRNSRV). Intrachain disulfides connect C63/C77, C70/C82, C76/C93, and C78/C105.

It belongs to the neurotoxin 06 (delta-actx) family. As to expression, expressed by the venom gland.

The protein resides in the secreted. Its function is as follows. Selectively slows channel inactivation of mammalian Nav1.1/SCN1A, Nav1.3/SCN3A, and Nav1.6/SCN8A and shows higher affinity for insect Nav1/para channels (site 3). Induces tonic repetitive firing of nerve impulses in insect neurons accompanied by plateau potentials. The polypeptide is Delta-hexatoxin-Mg1a (Macrothele gigas (Japanese funnel web spider)).